The chain runs to 91 residues: RNA-binding protein Hfq (91 aa).

One can recognise a Sm domain in the interval 9-68 (DPYLNALRRERIPVSIYLVNGIKLQGQIESFDQFVILLKNTVNQMVYKHAISTVVPARSV). The segment at 69–91 (SHHNNNHHTAPTEAVENVETQAE) is disordered.

Belongs to the Hfq family. Homohexamer.

Its function is as follows. RNA chaperone that binds small regulatory RNA (sRNAs) and mRNAs to facilitate mRNA translational regulation in response to envelope stress, environmental stress and changes in metabolite concentrations. Also binds with high specificity to tRNAs. The polypeptide is RNA-binding protein Hfq (Haemophilus influenzae (strain ATCC 51907 / DSM 11121 / KW20 / Rd)).